The chain runs to 124 residues: Phycocyanin PC645 alpha-3 subunit (124 aa).

Residue arginine 71 participates in (2R,3E)-phycocyanobilin binding. 3 residues coordinate mesobiliverdin: cysteine 73, tyrosine 81, and lysine 97.

It belongs to the phycoerythrin family. As to quaternary structure, heterotetramer of 2 different alpha chains and 2 identical beta chains which form 2 alpha-beta heterodimers within the heterotetramer. In terms of processing, contains one phycocyanobilin chromophore and one mesobiliverdin chromophore with binding mediated by both the alpha and beta subunits.

It localises to the plastid. It is found in the chloroplast thylakoid membrane. In terms of biological role, light-harvesting photosynthetic tetrapyrrole chromophore-protein from the phycobiliprotein complex. The protein is Phycocyanin PC645 alpha-3 subunit of Chroomonas sp. (strain CCMP270).